Reading from the N-terminus, the 379-residue chain is Protein COS4 (379 aa).

The next 4 helical transmembrane spans lie at 43–63 (IYKS…SVWW), 70–90 (IYPL…VLVI), 233–253 (ISNI…YVSR), and 255–275 (MCLL…VQGF).

Belongs to the DUP/COS family.

The protein localises to the membrane. In Saccharomyces cerevisiae (strain ATCC 204508 / S288c) (Baker's yeast), this protein is Protein COS4 (COS4).